A 165-amino-acid polypeptide reads, in one-letter code: Probable calcium-binding protein CML18 (165 aa).

4 EF-hand domains span residues 16–51 (EQLA…LGLK), 52–87 (PSQD…DLVK), 90–125 (YTDD…LGHA), and 126–161 (LTAE…AAFD). Asp29, Asn31, Asp33, Ser35, Glu40, Asp65, Asn67, Asn69, Glu76, Asp103, Asp105, Asn107, Tyr109, Glu114, Asp139, Asp141, Asp143, Cys145, and Glu150 together coordinate Ca(2+).

In terms of assembly, calcium and pH-dependent interaction with NHX1 (increases when pH decreases, better at pH 5.5 than at pH 7.5). Also interacts with the CPB protein At2g18750.

It is found in the vacuole. Potential calcium sensor that modulates ion selectivity of NHX1. This is Probable calcium-binding protein CML18 (CML18) from Arabidopsis thaliana (Mouse-ear cress).